A 180-amino-acid polypeptide reads, in one-letter code: NAD(P)H-quinone oxidoreductase subunit I, chloroplastic (180 aa).

4Fe-4S ferredoxin-type domains follow at residues 55 to 84 and 95 to 124; these read GRIH…VDWR and LNYS…MTEE. Positions 64, 67, 70, 74, 104, 107, 110, and 114 each coordinate [4Fe-4S] cluster.

This sequence belongs to the complex I 23 kDa subunit family. In terms of assembly, NDH is composed of at least 16 different subunits, 5 of which are encoded in the nucleus. [4Fe-4S] cluster is required as a cofactor.

It is found in the plastid. The protein resides in the chloroplast thylakoid membrane. The catalysed reaction is a plastoquinone + NADH + (n+1) H(+)(in) = a plastoquinol + NAD(+) + n H(+)(out). It catalyses the reaction a plastoquinone + NADPH + (n+1) H(+)(in) = a plastoquinol + NADP(+) + n H(+)(out). In terms of biological role, NDH shuttles electrons from NAD(P)H:plastoquinone, via FMN and iron-sulfur (Fe-S) centers, to quinones in the photosynthetic chain and possibly in a chloroplast respiratory chain. The immediate electron acceptor for the enzyme in this species is believed to be plastoquinone. Couples the redox reaction to proton translocation, and thus conserves the redox energy in a proton gradient. The polypeptide is NAD(P)H-quinone oxidoreductase subunit I, chloroplastic (Zea mays (Maize)).